We begin with the raw amino-acid sequence, 176 residues long: dCTP deaminase (176 aa).

Residues 99 to 104 and Asp-115 each bind dCTP; that span reads RSTLAR. Glu-125 (proton donor/acceptor) is an active-site residue. Gln-163 is a dCTP binding site.

It belongs to the dCTP deaminase family. As to quaternary structure, homotrimer.

The enzyme catalyses dCTP + H2O + H(+) = dUTP + NH4(+). Its pathway is pyrimidine metabolism; dUMP biosynthesis; dUMP from dCTP (dUTP route): step 1/2. In terms of biological role, catalyzes the deamination of dCTP to dUTP. The protein is dCTP deaminase of Pyrobaculum aerophilum (strain ATCC 51768 / DSM 7523 / JCM 9630 / CIP 104966 / NBRC 100827 / IM2).